Consider the following 180-residue polypeptide: Stathmin-3 (180 aa).

2 S-palmitoyl cysteine lipidation sites follow: Cys22 and Cys24. The SLD domain occupies 38–180 (GDMEVKQLDK…NKEQREEMSG (143 aa)). Residues Ser50, Ser60, Ser65, Ser68, Ser72, Ser73, and Ser81 each carry the phosphoserine modification. A disordered region spans residues 58-82 (LKSPSDLSPESPMLSSPPKRKDTSL). Positions 60–74 (SPSDLSPESPMLSSP) are enriched in low complexity. A coiled-coil region spans residues 76–179 (KRKDTSLEEL…RNKEQREEMS (104 aa)).

The protein belongs to the stathmin family. Interacts with STAT3. Interacts with CLU (secreted form); this interaction may act as an important modulator during neuronal differentiation. In terms of processing, N-terminal palmitoylation promotes specific anchoring to the cytosolic leaflet of Golgi membranes and subsequent vesicular trafficking along dendrites and axons. Neuronal Stathmins are substrates for palmitoyltransferases ZDHHC3, ZDHHC7 and ZDHHC15.

The protein resides in the golgi apparatus. It localises to the cell projection. The protein localises to the growth cone. It is found in the axon. Its subcellular location is the cytoplasm. The protein resides in the cytosol. Exhibits microtubule-destabilizing activity, which is antagonized by STAT3. The protein is Stathmin-3 (STMN3) of Bos taurus (Bovine).